Reading from the N-terminus, the 582-residue chain is Aspartate--tRNA ligase (582 aa).

Glu174 is a binding site for L-aspartate. An aspartate region spans residues 198–201 (QITK). Arg220 serves as a coordination point for L-aspartate. ATP contacts are provided by residues 220-222 (RDE) and Gln229. An L-aspartate-binding site is contributed by His443. Glu477 contacts ATP. An L-aspartate-binding site is contributed by Arg484. 529 to 532 (GLDR) serves as a coordination point for ATP.

This sequence belongs to the class-II aminoacyl-tRNA synthetase family. Type 1 subfamily. Homodimer.

Its subcellular location is the cytoplasm. It catalyses the reaction tRNA(Asp) + L-aspartate + ATP = L-aspartyl-tRNA(Asp) + AMP + diphosphate. Catalyzes the attachment of L-aspartate to tRNA(Asp) in a two-step reaction: L-aspartate is first activated by ATP to form Asp-AMP and then transferred to the acceptor end of tRNA(Asp). The chain is Aspartate--tRNA ligase from Streptococcus pyogenes serotype M3 (strain ATCC BAA-595 / MGAS315).